A 221-amino-acid polypeptide reads, in one-letter code: Deoxyribose-phosphate aldolase (221 aa).

Asp90 (proton donor/acceptor) is an active-site residue. Catalysis depends on Lys152, which acts as the Schiff-base intermediate with acetaldehyde. Lys181 functions as the Proton donor/acceptor in the catalytic mechanism.

The protein belongs to the DeoC/FbaB aldolase family. DeoC type 1 subfamily.

It localises to the cytoplasm. The catalysed reaction is 2-deoxy-D-ribose 5-phosphate = D-glyceraldehyde 3-phosphate + acetaldehyde. Its pathway is carbohydrate degradation; 2-deoxy-D-ribose 1-phosphate degradation; D-glyceraldehyde 3-phosphate and acetaldehyde from 2-deoxy-alpha-D-ribose 1-phosphate: step 2/2. Its function is as follows. Catalyzes a reversible aldol reaction between acetaldehyde and D-glyceraldehyde 3-phosphate to generate 2-deoxy-D-ribose 5-phosphate. This chain is Deoxyribose-phosphate aldolase, found in Syntrophotalea carbinolica (strain DSM 2380 / NBRC 103641 / GraBd1) (Pelobacter carbinolicus).